Consider the following 344-residue polypeptide: Protein RecA (344 aa).

66 to 73 (GPESSGKT) is a binding site for ATP.

It belongs to the RecA family.

The protein localises to the cytoplasm. In terms of biological role, can catalyze the hydrolysis of ATP in the presence of single-stranded DNA, the ATP-dependent uptake of single-stranded DNA by duplex DNA, and the ATP-dependent hybridization of homologous single-stranded DNAs. It interacts with LexA causing its activation and leading to its autocatalytic cleavage. The polypeptide is Protein RecA (Azoarcus sp. (strain BH72)).